Here is a 292-residue protein sequence, read N- to C-terminus: L-serine dehydratase, alpha chain (292 aa).

Belongs to the iron-sulfur dependent L-serine dehydratase family. As to quaternary structure, heterooctamer of four alpha chains and four beta chains. [4Fe-4S] cluster serves as cofactor.

The enzyme catalyses L-serine = pyruvate + NH4(+). Its pathway is carbohydrate biosynthesis; gluconeogenesis. This chain is L-serine dehydratase, alpha chain (sdhA), found in Peptoniphilus asaccharolyticus (Peptostreptococcus asaccharolyticus).